Reading from the N-terminus, the 314-residue chain is 3'-5' exoribonuclease YhaM (314 aa).

The HD domain occupies 163–279; the sequence is HVVSMLDLAK…LHYIDNLDAK (117 aa).

This sequence belongs to the YhaM family.

In terms of biological role, shows a 3'-5' exoribonuclease activity. This is 3'-5' exoribonuclease YhaM from Bacillus mycoides (strain KBAB4) (Bacillus weihenstephanensis).